Reading from the N-terminus, the 397-residue chain is 16-O-methyltransferase bsc6 (397 aa).

Residue Asp262 participates in S-adenosyl-L-methionine binding. His302 (proton acceptor) is an active-site residue.

Belongs to the class I-like SAM-binding methyltransferase superfamily. Cation-independent O-methyltransferase family. Requires S-adenosyl-L-methionine as cofactor.

It functions in the pathway mycotoxin biosynthesis. In terms of biological role, 16-O-methyltransferase; part of the gene cluster that mediates the biosynthesis of the diterpene glucoside brassicicene C. In the first step of the brassicicene C biosynthesis, the bifunctional diterpene synthase bsc8 that possesses both prenyl transferase and terpene cyclase activity, converts isopentenyl diphosphate and dimethylallyl diphosphate into geranylgeranyl diphosphate (GGDP) that is further converted into fusicocca-2,10(14)-diene, the first precursor for brassicicene C. Fusicocca-2,10(14)-diene is then substrate of cytochrome P450 monooxygenase bsc1 for hydroxylation at the C-8 position. Oxidation at C-16 position to aldehyde is then catalyzed by the cytochrome P450 monooyxygenase bsc7, yielding fusicocca-2,10(14)-diene-8-beta,16-diol. Follows the isomerization of the double bond and reduction of aldehyde to alcohol catalyzed by the short-chain dehydrogenase/reductase bsc3 to yield the diol compound fusicocca-1,10(14)-diene-8 beta,16-diol. The next step is the oxidation at the C-3 position of fusicocca-2,10(14)-diene-8-beta,16-diol catalyzed by the alpha-ketoglutarate dependent dioxygenase bsc9, to produce a triol compound. Methylation of the hydroxy group at position 16 is performed by the methyltransferase bsc6. 16-O-methylation is followed by oxidation at the C-13 position to ketone and an alkyl shift of the methyl group leads to brassicicene C. Although the probable acetyltransferase bsc4 is included in the gene cluster, no acetylation reactions are necessary for brassicicene C biosynthesis. However, the fact that brassicicene E, which is a structurally related compound having an acetoxy group at position 12, was previously isolated from another strain of A.brassicicola suggests that the ATCC 96836 strain might also produce a small amount of brassicicene E. The polypeptide is 16-O-methyltransferase bsc6 (Alternaria brassicicola (Dark leaf spot agent)).